Here is a 190-residue protein sequence, read N- to C-terminus: Nucleoside triphosphate pyrophosphatase (190 aa).

The active-site Proton acceptor is the Asp-69.

This sequence belongs to the Maf family. A divalent metal cation is required as a cofactor.

It is found in the cytoplasm. It catalyses the reaction a ribonucleoside 5'-triphosphate + H2O = a ribonucleoside 5'-phosphate + diphosphate + H(+). It carries out the reaction a 2'-deoxyribonucleoside 5'-triphosphate + H2O = a 2'-deoxyribonucleoside 5'-phosphate + diphosphate + H(+). In terms of biological role, nucleoside triphosphate pyrophosphatase. May have a dual role in cell division arrest and in preventing the incorporation of modified nucleotides into cellular nucleic acids. The sequence is that of Nucleoside triphosphate pyrophosphatase from Helicobacter pylori (strain ATCC 700392 / 26695) (Campylobacter pylori).